Consider the following 39-residue polypeptide: Cytochrome b6-f complex subunit 5 (39 aa).

A helical transmembrane segment spans residues 5–25 (LLCGIVLGLVPITLLGLFVSA).

Belongs to the PetG family. In terms of assembly, the 4 large subunits of the cytochrome b6-f complex are cytochrome b6, subunit IV (17 kDa polypeptide, PetD), cytochrome f and the Rieske protein, while the 4 small subunits are PetG, PetL, PetM and PetN. The complex functions as a dimer.

The protein resides in the cellular thylakoid membrane. Component of the cytochrome b6-f complex, which mediates electron transfer between photosystem II (PSII) and photosystem I (PSI), cyclic electron flow around PSI, and state transitions. PetG is required for either the stability or assembly of the cytochrome b6-f complex. In Prochlorococcus marinus (strain MIT 9301), this protein is Cytochrome b6-f complex subunit 5.